The sequence spans 426 residues: Putative competence-damage inducible protein (426 aa).

The protein belongs to the CinA family.

The polypeptide is Putative competence-damage inducible protein (Symbiobacterium thermophilum (strain DSM 24528 / JCM 14929 / IAM 14863 / T)).